Consider the following 260-residue polypeptide: Carbonic anhydrase 2 (260 aa).

An N-acetylserine modification is found at S2. At S2 the chain carries Phosphoserine. Residues 3–259 (HHWGYGKHNG…LKNRQVRGFP (257 aa)) enclose the Alpha-carbonic anhydrase domain. The Proton donor/acceptor role is filled by H64. Zn(2+) is bound by residues H94, H96, and H119. Phosphoserine occurs at positions 165 and 172. Residue 198–199 (TT) participates in substrate binding.

This sequence belongs to the alpha-carbonic anhydrase family. In terms of assembly, interacts with SLC4A4. Interaction with SLC4A7 regulates SLC4A7 transporter activity. Zn(2+) is required as a cofactor.

Its subcellular location is the cytoplasm. The protein resides in the cell membrane. The enzyme catalyses hydrogencarbonate + H(+) = CO2 + H2O. It carries out the reaction urea = cyanamide + H2O. Inhibited by acetazolamide. In terms of biological role, catalyzes the reversible hydration of carbon dioxide. Can also hydrate cyanamide to urea. Involved in the regulation of fluid secretion into the anterior chamber of the eye. Essential for bone resorption and osteoclast differentiation. Contributes to intracellular pH regulation in the duodenal upper villous epithelium during proton-coupled peptide absorption. Stimulates the chloride-bicarbonate exchange activity of SLC26A6. The chain is Carbonic anhydrase 2 (CA2) from Bos taurus (Bovine).